The chain runs to 213 residues: Large ribosomal subunit protein uL23 (213 aa).

Positions 1-117 (MNHNEIIKYP…KSTSELKLEE (117 aa)) are large ribosomal subunit protein uL23. The segment at 118–213 (KIAAKIAAKE…TTKKTTTKKV (96 aa)) is unknown.

Belongs to the universal ribosomal protein uL23 family. Part of the 50S ribosomal subunit. Contacts protein L29, and trigger factor when it is bound to the ribosome.

Its function is as follows. One of the early assembly proteins it binds 23S rRNA. One of the proteins that surrounds the polypeptide exit tunnel on the outside of the ribosome. Forms the main docking site for trigger factor binding to the ribosome. This is Large ribosomal subunit protein uL23 from Mycoplasma mobile (strain ATCC 43663 / 163K / NCTC 11711) (Mesomycoplasma mobile).